An 822-amino-acid chain; its full sequence is Integrator complex assembly factor BRAT1 (822 aa).

The required for interaction with NDFIP1 stretch occupies residues 100–200 (LGLFGESGAP…WPMCAQKIVN (101 aa)). 2 HEAT repeats span residues 495–531 (LLFLGELFPILQKRLCSPCWEVRDSALEFLTHLIRHW) and 544–576 (SEVPTLALQLLQDPESYVRASAVGAAGQLSSQG). Position 743 is a phosphoserine (serine 743). The short motif at 820-822 (DCY) is the BRAT1-like motif element. Cysteine 821 is a Zn(2+) binding site.

This sequence belongs to the BRAT1 family. As to quaternary structure, part of the multiprotein complex composed of BRAT1, WDR73, as well as integrator complex subunits INTS9 and INTS11. Interacts with BRCA1 and ATM. Interacts with MTOR and RPTOR. Interacts with NDFIP1. Interacts with SMC1A and PRKDC. In terms of processing, ubiquitinated by NEDD4, NEDD4L and ITCH; mono- and polyubiquitinated forms are detected. In terms of tissue distribution, high levels detected in the cortex and much lower levels detected in the cerebellum, spinal cord and lung (at protein level).

The protein resides in the nucleus. Its subcellular location is the cytoplasm. Its function is as follows. Component of a multiprotein complex required for the assembly of the RNA endonuclease module of the integrator complex. Associates with INTS9 and INTS11 in the cytoplasm and blocks the active site of INTS11 to inhibit the endonuclease activity of INTS11 before formation of the full integrator complex. Following dissociation of WDR73 of the complex, BRAT1 facilitates the nuclear import of the INTS9-INTS11 heterodimer. In the nucleus, INTS4 is integrated to the INTS9-INTS11 heterodimer and BRAT1 is released from the mature RNA endonuclease module by inositol hexakisphosphate (InsP6). BRAT1 is also involved in DNA damage response; activates kinases ATM, SMC1A and PRKDC by modulating their phosphorylation status following ionizing radiation (IR) stress. Plays a role in regulating mitochondrial function and cell proliferation. Required for protein stability of MTOR and MTOR-related proteins, and cell cycle progress by growth factors. In Mus musculus (Mouse), this protein is Integrator complex assembly factor BRAT1.